The chain runs to 587 residues: Lamin-B1 (587 aa).

Polar residues predominate over residues 1–11 (MATATPVQQRA). A disordered region spans residues 1–29 (MATATPVQQRAGSRASAPATPFSPTRLSR). Alanine 2 is modified (N-acetylalanine). The interval 2 to 34 (ATATPVQQRAGSRASAPATPFSPTRLSRLQEKE) is head. Threonine 3 and threonine 5 each carry phosphothreonine. At arginine 14 the chain carries Omega-N-methylarginine. Position 16 is a phosphoserine (serine 16). At threonine 20 the chain carries Phosphothreonine. Serine 23 carries the phosphoserine modification. Threonine 25 is subject to Phosphothreonine. Serine 28 carries the phosphoserine modification. The region spanning 32–388 (EKEELRELND…KLLEGEEERL (357 aa)) is the IF rod domain. The tract at residues 35 to 69 (ELRELNDRLAVYIDKVRSLETENSALQLQVTEREE) is coil 1A. Residues 70–81 (VRGRELTGLKAL) are linker 1. The segment at 82–215 (YETELADARR…EFRKNMYEEE (134 aa)) is coil 1B. Lysine 102 is covalently cross-linked (Glycyl lysine isopeptide (Lys-Gly) (interchain with G-Cter in SUMO2)). Lysine 111 carries the N6-acetyllysine modification. Residue lysine 123 forms a Glycyl lysine isopeptide (Lys-Gly) (interchain with G-Cter in SUMO2) linkage. Residue serine 126 is modified to Phosphoserine. Lysine 145 participates in a covalent cross-link: Glycyl lysine isopeptide (Lys-Gly) (interchain with G-Cter in SUMO2). An N6-acetyllysine; alternate modification is found at lysine 157. Lysine 157 is covalently cross-linked (Glycyl lysine isopeptide (Lys-Gly) (interchain with G-Cter in SUMO2); alternate). The residue at position 158 (serine 158) is a Phosphoserine. Lysine 181 is covalently cross-linked (Glycyl lysine isopeptide (Lys-Gly) (interchain with G-Cter in SUMO2)). A phosphoserine mark is found at serine 200 and serine 232. The tract at residues 216–243 (INETRRKHETRLVEVDSGRQIEYEYKLA) is linker 2. Residues lysine 241 and lysine 261 each participate in a glycyl lysine isopeptide (Lys-Gly) (interchain with G-Cter in SUMO2) cross-link. Residues 244 to 386 (QALHEMREQH…YRKLLEGEEE (143 aa)) form a coil 2 region. Lysine 271 bears the N6-acetyllysine; alternate mark. Residue lysine 271 forms a Glycyl lysine isopeptide (Lys-Gly) (interchain with G-Cter in SUMO2); alternate linkage. Phosphoserine occurs at positions 278 and 302. Lysine 312 is covalently cross-linked (Glycyl lysine isopeptide (Lys-Gly) (interchain with G-Cter in SUMO2)). At lysine 330 the chain carries N6-acetyllysine; alternate. Lysine 330 is covalently cross-linked (Glycyl lysine isopeptide (Lys-Gly) (interchain with G-Cter in SUMO2); alternate). Phosphoserine occurs at positions 375 and 393. Residues 387–587 (RLKLSPSPSS…RASNKSCAIM (201 aa)) are tail. Low complexity predominate over residues 390-409 (LSPSPSSRVTVSRASSSRSV). The tract at residues 390–432 (LSPSPSSRVTVSRASSSRSVRTTRGKRKRVDVEESEASSSVSI) is disordered. O-linked (GlcNAc) threonine glycosylation occurs at threonine 399. Arginine 413 carries the post-translational modification Omega-N-methylarginine. The Nuclear localization signal signature appears at 415–420 (KRKRVD). The 117-residue stretch at 430–546 (VSISHSASAT…EEVAQRSTVF (117 aa)) folds into the LTD domain. Lysine 483 carries the N6-acetyllysine modification. Lysine 532 participates in a covalent cross-link: Glycyl lysine isopeptide (Lys-Gly) (interchain with G-Cter in SUMO2). Residue serine 534 is modified to Phosphoserine. Residue lysine 547 forms a Glycyl lysine isopeptide (Lys-Gly) (interchain with G-Cter in SUMO2) linkage. Residues 550–587 (IPEEEEEEEEEPIGVPLEEERFHQQGTPRASNKSCAIM) form a disordered region. A compositionally biased stretch (acidic residues) spans 551–561 (PEEEEEEEEEP). A compositionally biased stretch (polar residues) spans 573–587 (QQGTPRASNKSCAIM). Position 576 is a phosphothreonine (threonine 576). A Cysteine methyl ester modification is found at cysteine 584. Cysteine 584 carries the S-farnesyl cysteine lipid modification. Residues 585-587 (AIM) constitute a propeptide, removed in mature form.

It belongs to the intermediate filament family. Homodimer. Lamin dimers then assemble into dimeric head-to-tail polymers. Ultimately, two head-to-tail polymers assemble laterally into a protofilament with a uniformly shaped rod of 3.5 nm in diameter. Interacts with SPAG4 and SEPT12. Post-translationally, B-type lamins undergo a series of modifications, such as farnesylation and phosphorylation. Increased phosphorylation of the lamins occurs before envelope disintegration and probably plays a role in regulating lamin associations. In terms of processing, phosphorylation plays a key role in lamin organization, subcellular localization and nuclear envelope disintegration. Phosphorylation by CDK1 at Ser-23 and Ser-393 at the onset of mitosis drives lamin disassembly and nuclear envelope breakdown.

It is found in the nucleus lamina. Its function is as follows. Lamins are intermediate filament proteins that assemble into a filamentous meshwork, and which constitute the major components of the nuclear lamina, a fibrous layer on the nucleoplasmic side of the inner nuclear membrane. Lamins provide a framework for the nuclear envelope, bridging the nuclear envelope and chromatin, thereby playing an important role in nuclear assembly, chromatin organization, nuclear membrane and telomere dynamics. The structural integrity of the lamina is strictly controlled by the cell cycle, as seen by the disintegration and formation of the nuclear envelope in prophase and telophase, respectively. The chain is Lamin-B1 (Lmnb1) from Rattus norvegicus (Rat).